The chain runs to 119 residues: MAARIAGVNIPVQKHARIALQAIYGIGNSRALEICKEAKIDPATKVKDLSEAELDALRTEVGKFSVEGDLRRERSMDIKRKMDLGTYEGIRHRRGLPLRGQRTRSNARTRKGKRKPIRS.

The tract at residues 90-119 (IRHRRGLPLRGQRTRSNARTRKGKRKPIRS) is disordered. Positions 91–119 (RHRRGLPLRGQRTRSNARTRKGKRKPIRS) are enriched in basic residues.

This sequence belongs to the universal ribosomal protein uS13 family. In terms of assembly, part of the 30S ribosomal subunit. Forms a loose heterodimer with protein S19. Forms two bridges to the 50S subunit in the 70S ribosome.

In terms of biological role, located at the top of the head of the 30S subunit, it contacts several helices of the 16S rRNA. In the 70S ribosome it contacts the 23S rRNA (bridge B1a) and protein L5 of the 50S subunit (bridge B1b), connecting the 2 subunits; these bridges are implicated in subunit movement. Contacts the tRNAs in the A and P-sites. The protein is Small ribosomal subunit protein uS13 of Coxiella burnetii (strain CbuK_Q154) (Coxiella burnetii (strain Q154)).